A 126-amino-acid polypeptide reads, in one-letter code: Bleomycin resistance protein (126 aa).

Positions 1 to 119 (MTDQATPNLP…DGTLLRLIQN (119 aa)) constitute a VOC domain.

The protein belongs to the bleomycin resistance protein family.

Binding protein with a strong affinity to the bleomycin family of antibiotics. Binds to CL990; an antimitotic-antibiotic compound. This Klebsiella pneumoniae protein is Bleomycin resistance protein (ble).